Reading from the N-terminus, the 997-residue chain is Pro-apoptotic serine protease NMA111 (997 aa).

The disordered stretch occupies residues 1 to 43 (MTISLSNIKKRDHSKISDGTSGESSLVKRKQLESATGDQEEEY). The interval 83–273 (VVSIHFSQVA…LPLDRILRAL (191 aa)) is serine protease. Active-site charge relay system residues include His121, Asp152, and Ser235. 2 PDZ domains span residues 300–378 (RRLG…QRGG) and 779–854 (EEWI…VRDG).

This sequence belongs to the peptidase S1C family. In terms of assembly, interacts with BIR1.

The protein localises to the nucleus. Nuclear serine protease which mediates apoptosis through proteolysis of the apoptotic inhibitor BIR1. This Saccharomyces cerevisiae (strain YJM789) (Baker's yeast) protein is Pro-apoptotic serine protease NMA111 (NMA111).